Reading from the N-terminus, the 526-residue chain is MSAKAEYLQQEDFLHRSNKLQEISDLGINPYPYEFPGTSSVEEIKNEFSSQSLGNSEDATNKNTPKVKISGRMVLFRSMGKNAFAQILDNDQKIQVMFNRDFSSVAGLPEDAEITPIKFIEKKLDLGDILGIEGYLFFTHSGELTILVETVTLLGKALISLPDKHAGLSDKETRYRKRWLDLICSDEVRQTFLKRSRIIKLIRQYMDAQDFIEVETPILQNIYGGAEATPFVTTLNALHSDMFLRISLEIALKKILVGGTPRVYEIGKVFRNEGIDRTHNPEFTMIEAYAMNIDYHSVMVYVENLIEYLVGELNNGSTVLTYSHLKQGPQTIDFKAPWIRMTMKDSIKTYGGVDVDLHGDHELRNILKERSSLPEESYATAPRGLLIAALFDELVCDKLIAPHHITDHPLETTPLCKSLRSGEEDYVERFESFCLGKELCNAYSELTDPMRQRMLLEKQMEKKALDPDSEYHPIDEEFLEALCQGMPPAGGFGIGIDRLVMILTDSASIRDVLYFPVMRRLESEND.

Mg(2+)-binding residues include E431 and E438.

This sequence belongs to the class-II aminoacyl-tRNA synthetase family. Homodimer. It depends on Mg(2+) as a cofactor.

Its subcellular location is the cytoplasm. It carries out the reaction tRNA(Lys) + L-lysine + ATP = L-lysyl-tRNA(Lys) + AMP + diphosphate. The chain is Lysine--tRNA ligase from Chlamydia felis (strain Fe/C-56) (Chlamydophila felis).